A 191-amino-acid chain; its full sequence is MRNAKITRKTKETDIQMELELDGTGSSNIDTGIGFFDHMLTSFAKHGNLDLIIEATGDLIVDEHHLIEDTAIVLGQALSEALGDKDGIARFGDARIPMDEALADVVLDLGGRTYLVMKAEFEAPRVGEMNTQLVRHFFESLTDNSKMNLHIAVTGYNDHHKIEALFKAFAYALRRAVKIEGEGIKSTKGVL.

The protein belongs to the imidazoleglycerol-phosphate dehydratase family.

It localises to the cytoplasm. The catalysed reaction is D-erythro-1-(imidazol-4-yl)glycerol 3-phosphate = 3-(imidazol-4-yl)-2-oxopropyl phosphate + H2O. The protein operates within amino-acid biosynthesis; L-histidine biosynthesis; L-histidine from 5-phospho-alpha-D-ribose 1-diphosphate: step 6/9. In Methanococcoides burtonii (strain DSM 6242 / NBRC 107633 / OCM 468 / ACE-M), this protein is Imidazoleglycerol-phosphate dehydratase.